The sequence spans 257 residues: NAD-capped RNA hydrolase NudC (257 aa).

Positions 25 and 69 each coordinate substrate. Zn(2+) contacts are provided by Cys98 and Cys101. Glu111 contacts substrate. 2 residues coordinate Zn(2+): Cys116 and Cys119. Substrate is bound at residue Tyr124. The Nudix hydrolase domain occupies 125 to 248 (PQIAPCIIVA…TVARRLIEDT (124 aa)). 3 residues coordinate a divalent metal cation: Ala158, Glu174, and Glu178. Positions 159 to 180 (GFVEVGETLEQAVAREVMEESG) match the Nudix box motif. 192–199 (QPWPFPQS) is a binding site for substrate. A divalent metal cation is bound at residue Glu219. Ala241 contributes to the substrate binding site.

The protein belongs to the Nudix hydrolase family. NudC subfamily. In terms of assembly, homodimer. The cofactor is Mg(2+). It depends on Mn(2+) as a cofactor. Requires Zn(2+) as cofactor.

It catalyses the reaction a 5'-end NAD(+)-phospho-ribonucleoside in mRNA + H2O = a 5'-end phospho-adenosine-phospho-ribonucleoside in mRNA + beta-nicotinamide D-ribonucleotide + 2 H(+). It carries out the reaction NAD(+) + H2O = beta-nicotinamide D-ribonucleotide + AMP + 2 H(+). The enzyme catalyses NADH + H2O = reduced beta-nicotinamide D-ribonucleotide + AMP + 2 H(+). Functionally, mRNA decapping enzyme that specifically removes the nicotinamide adenine dinucleotide (NAD) cap from a subset of mRNAs by hydrolyzing the diphosphate linkage to produce nicotinamide mononucleotide (NMN) and 5' monophosphate mRNA. The NAD-cap is present at the 5'-end of some mRNAs and stabilizes RNA against 5'-processing. Has preference for mRNAs with a 5'-end purine. Catalyzes the hydrolysis of a broad range of dinucleotide pyrophosphates. This is NAD-capped RNA hydrolase NudC from Shigella flexneri.